The primary structure comprises 206 residues: Small ribosomal subunit protein uS4 (206 aa).

An S4 RNA-binding domain is found at 96-156 (GRLDNVVYRM…EKSKKQARIK (61 aa)).

Belongs to the universal ribosomal protein uS4 family. In terms of assembly, part of the 30S ribosomal subunit. Contacts protein S5. The interaction surface between S4 and S5 is involved in control of translational fidelity.

Its function is as follows. One of the primary rRNA binding proteins, it binds directly to 16S rRNA where it nucleates assembly of the body of the 30S subunit. In terms of biological role, with S5 and S12 plays an important role in translational accuracy. The protein is Small ribosomal subunit protein uS4 of Glaesserella parasuis serovar 5 (strain SH0165) (Haemophilus parasuis).